The chain runs to 256 residues: Ribonuclease T2 (256 aa).

A signal peptide spans 1 to 24 (MRPAALRGALLGCLCLALLCLGGA). A disulfide bond links Cys48 and Cys55. Residue His65 is part of the active site. 3 disulfide bridges follow: Cys75–Cys121, Cys184–Cys241, and Cys202–Cys213. 2 N-linked (GlcNAc...) asparagine glycosylation sites follow: Asn76 and Asn106. Catalysis depends on residues Glu114 and His118. N-linked (GlcNAc...) asparagine glycosylation occurs at Asn212.

Belongs to the RNase T2 family. In terms of tissue distribution, ubiquitous. Higher expression levels observed in the temporal lobe and fetal brain.

It is found in the secreted. The protein localises to the lysosome lumen. It localises to the endoplasmic reticulum lumen. Its subcellular location is the mitochondrion intermembrane space. It carries out the reaction a ribonucleotidyl-ribonucleotide-RNA + H2O = a 3'-end 3'-phospho-ribonucleotide-RNA + a 5'-end dephospho-ribonucleoside-RNA + H(+). The catalysed reaction is an adenylyl-uridine-RNA = a 3'-end 2',3'-cyclophospho-AMP-RNA + a 5'-end dephospho-uridine-RNA. The enzyme catalyses a guanylyl-uridine-RNA = a 3'-end 2',3'-cyclophospho-GMP-RNA + a 5'-end dephospho-uridine-RNA. With respect to regulation, inhibited by Zn(2+) and Cu(2+). Ribonuclease that plays an essential role in innate immune response by recognizing and degrading RNAs from microbial pathogens that are subsequently sensed by TLR8. Cleaves preferentially single-stranded RNA molecules between purine and uridine residues, which critically contributes to the supply of catabolic uridine and the generation of purine-2',3'-cyclophosphate-terminated oligoribonucleotides. In turn, RNase T2 degradation products promote the RNA-dependent activation of TLR8. In plasmacytoid dendritic cells, it cooperates with PLD3 or PLD4 5'-&gt;3' exonucleases to process RNA fragments and release 2',3'-cyclic guanosine monophosphate (2',3'-cGMP), a potent stimulatory ligand for TLR7. Also plays a key role in degradation of mitochondrial RNA and processing of non-coding RNA imported from the cytosol into mitochondria. Participates as well in degradation of mitochondrion-associated cytosolic rRNAs. This Homo sapiens (Human) protein is Ribonuclease T2 (RNASET2).